Reading from the N-terminus, the 467-residue chain is tRNA-2-methylthio-N(6)-dimethylallyladenosine synthase (467 aa).

Residues 1-20 form a disordered region; it reads MSDDTTQIEPAMAQETSPRA. Residues 23–143 enclose the MTTase N-terminal domain; sequence RKVFVKTYGC…LPNALARVRG (121 aa). Cysteine 32, cysteine 68, cysteine 106, cysteine 184, cysteine 188, and cysteine 191 together coordinate [4Fe-4S] cluster. Residues 170–402 form the Radical SAM core domain; the sequence is RKRGVSAFLT…QALLSAQQYA (233 aa). One can recognise a TRAM domain in the interval 405–467; the sequence is DSMIGRKMDV…TNSLIAQKLA (63 aa).

Belongs to the methylthiotransferase family. MiaB subfamily. As to quaternary structure, monomer. It depends on [4Fe-4S] cluster as a cofactor.

It localises to the cytoplasm. It carries out the reaction N(6)-dimethylallyladenosine(37) in tRNA + (sulfur carrier)-SH + AH2 + 2 S-adenosyl-L-methionine = 2-methylsulfanyl-N(6)-dimethylallyladenosine(37) in tRNA + (sulfur carrier)-H + 5'-deoxyadenosine + L-methionine + A + S-adenosyl-L-homocysteine + 2 H(+). Functionally, catalyzes the methylthiolation of N6-(dimethylallyl)adenosine (i(6)A), leading to the formation of 2-methylthio-N6-(dimethylallyl)adenosine (ms(2)i(6)A) at position 37 in tRNAs that read codons beginning with uridine. The chain is tRNA-2-methylthio-N(6)-dimethylallyladenosine synthase from Brucella canis (strain ATCC 23365 / NCTC 10854 / RM-666).